Consider the following 65-residue polypeptide: UPF0370 protein Ent638_2968 (65 aa).

Residues 4-24 (LSKYWWILVLVFLVGVLLNVI) traverse the membrane as a helical segment. A disordered region spans residues 39–65 (KPELPPHRDFNDKWDDDDNWPKKDQKK). The segment covering 42–65 (LPPHRDFNDKWDDDDNWPKKDQKK) has biased composition (basic and acidic residues).

Belongs to the UPF0370 family.

The protein localises to the cell membrane. The protein is UPF0370 protein Ent638_2968 of Enterobacter sp. (strain 638).